Consider the following 550-residue polypeptide: CTP synthase (550 aa).

The segment at 1 to 270 (MTKFVFVTGG…DRLICEELRL (270 aa)) is amidoligase domain. Residue S13 coordinates CTP. Position 13 (S13) interacts with UTP. Residues 14–19 (SLGKGI) and D71 each bind ATP. The Mg(2+) site is built by D71 and E144. Residues 151–153 (DIE), 191–196 (KTKPTQ), and K227 each bind CTP. Residues 191-196 (KTKPTQ) and K227 each bind UTP. One can recognise a Glutamine amidotransferase type-1 domain in the interval 295-547 (TIGMVGKYVD…VEAALAGQQR (253 aa)). G356 lines the L-glutamine pocket. Catalysis depends on C383, which acts as the Nucleophile; for glutamine hydrolysis. Residues 384–387 (LGMQ), E407, and R473 contribute to the L-glutamine site. Residues H520 and E522 contribute to the active site.

Belongs to the CTP synthase family. Homotetramer.

It catalyses the reaction UTP + L-glutamine + ATP + H2O = CTP + L-glutamate + ADP + phosphate + 2 H(+). The enzyme catalyses L-glutamine + H2O = L-glutamate + NH4(+). It carries out the reaction UTP + NH4(+) + ATP = CTP + ADP + phosphate + 2 H(+). The protein operates within pyrimidine metabolism; CTP biosynthesis via de novo pathway; CTP from UDP: step 2/2. With respect to regulation, allosterically activated by GTP, when glutamine is the substrate; GTP has no effect on the reaction when ammonia is the substrate. The allosteric effector GTP functions by stabilizing the protein conformation that binds the tetrahedral intermediate(s) formed during glutamine hydrolysis. Inhibited by the product CTP, via allosteric rather than competitive inhibition. Its function is as follows. Catalyzes the ATP-dependent amination of UTP to CTP with either L-glutamine or ammonia as the source of nitrogen. Regulates intracellular CTP levels through interactions with the four ribonucleotide triphosphates. The chain is CTP synthase from Cupriavidus pinatubonensis (strain JMP 134 / LMG 1197) (Cupriavidus necator (strain JMP 134)).